The following is an 83-amino-acid chain: Scyreptin (83 aa).

In terms of biological role, cationic antimicrobial peptide that exhibits a potent and broad-spectrum antimicrobial activity against both bacteria and fungi, as well as against the multidrug-resistant bacteria P.aeruginosa. Exhibits rapid bactericidal kinetic. Acts by destroying the integrity of bacterial membranes, leading to bacterial death. Also exhibits potent anti-biofilm activity against P.aeruginosa. Shows high thermal stability and ion tolerance, as it maintains antibacterial activity even when heated to 100 degrees Celsius for 30 minutes and in presence of high levels of NaCl, CaCl(2) and MgCl(2). Does not show cytotoxicity and hemolytic activity. In a mouse model of burn infection, exhibits a remarkably reduction in the bacterial load caused by multidrug-resistant P.aeruginosa at the site of infection, and promotes wound healing. The chain is Scyreptin from Scylla paramamosain (Mud crab).